The sequence spans 639 residues: MPAWSLLVLSALPVVGMFAGQTTFFSSPWETLFGTAAEQHEAAMDGRIQGRGLLSSHFGWYGWPGQTFDYVIVGGGTAGLAMAHRLSEDGSNSVAVIEAGGFYEIEAGNATEVPMFLFNYFFDNGHVKNPLFDWYQYTEAQPGLAGRKMFYMQGKTLGGSTARGAMLYHRGSKGAYQLWADRVGDDSYTWDNWLPFFKKSVQFSGPLTNPRPANATASNDVSAFAATAEEEGPVQVAYPYLTNAISSWVDKALEKMGFPEAQGFSNGQLLGRSYITHTIHPKTRRRDTASTSYLQTALRTSNSLNVITHTLVKKIDFDEEKRATGVVVNTGGFEWQIGAKKEVILSAGVMRSPQLLMVSGLGPRETLEKLDIPVLSDLPGVGQNMQDTIILGPTNPVKVESHSQLMGSKETLPRSIYEYNNFRTGLLTNPGQDYFAFEKHQPGNLSEATAADIDKAFPADWPTFSYIALDDTFVPQYDGKNYFSMSAALLATFSRGTVTINTTNTADNPVVDPRWLDDPRDKEMAVAAFRRCREIVASETMQQVIDGPELLPGFEYQTDEEILNYIAETSDAYYAGVGTCAMGKPDDPLAVLDSKARVRGVKGLRVVDASAFPFAIDGQPMATVYALAEKVAADIIAGN.

The signal sequence occupies residues 1 to 19; sequence MPAWSLLVLSALPVVGMFA. Residues 77-78 and 98-99 each bind FAD; these read TA and EA. N-linked (GlcNAc...) asparagine glycosylation is present at asparagine 109. Residue 164-167 participates in FAD binding; the sequence is GAML. Asparagine 214 is a glycosylation site (N-linked (GlcNAc...) asparagine). Residues 263 to 301 enclose the PAS domain; that stretch reads GFSNGQLLGRSYITHTIHPKTRRRDTASTSYLQTALRTS. N-linked (GlcNAc...) asparagine glycans are attached at residues asparagine 444 and asparagine 501. FAD-binding positions include alanine 609 and 620 to 621; that span reads PM.

The protein belongs to the GMC oxidoreductase family. In terms of assembly, homodimer. FAD serves as cofactor.

Its subcellular location is the cytoplasm. It localises to the cytosol. It carries out the reaction (2S-3S)-versiconal hemiacetal = versicolorin B + H2O. It catalyses the reaction (S)-5'-oxoaverantin + H(+) = (1'S,5'S)-averufin + H2O. Its pathway is mycotoxin biosynthesis; sterigmatocystin biosynthesis. Its function is as follows. Norsolorinic acid reductase; part of the gene cluster that mediates the biosynthesis of sterigmatocystin (ST), a polyketide-derived furanocoumarin which is part of the most toxic and carcinogenic compounds among the known mycotoxins. The first step in the biosynthesis of sterigmatocystin is the production of hexanoate by the fatty acid synthase (FAS) units stcJ and stcK. The polyketide backbone is assembled by the non-reducing polyketide synthase stcA by condensation of the starter hexanoyl-CoA and 7 malonyl-CoA extender units followed by cyclization and release of norsolorinic acid. Norsolorinic acid is the first stable intermediate in the biosynthesis of sterigmatocystin and is converted into averantin (AVN) by the ketoreductase stcE which reduces the hexanoate ketone to an alcohol. Averantin is then oxidized into 5'-hydroxyaverantin (HAVN) by the cytochrome P450 monooxygenase stcF. 5'-hydroxyaverantin is further converted to 5'-oxyaverantin (OAVN) by the 5'-hydroxyaverantin dehydrogenase stcG. The next step is the conversion of OAVN into averufin (AVF) which is catalyzed by a yet to be identified enzyme. The cytochrome P450 monooxygenase stcB and the flavin-binding monooxygenase stcW are both required for the conversion of averufin to 1-hydroxyversicolorone. The esterase stcI probably catalyzes the formation of versiconal hemiacetal acetate from 1-hydroxyversicolorone. The oxydoreductase stcN then probably catalyzes the biosynthetic step from versiconal to versicolorin B (VERB). The next step is performed by the versicolorin B desaturase stcL to produce versicolorin A (VERA). The ketoreductase stcU and the cytochrome P450 monooxygenase stcS are involved in the conversion of versicolorin A to demethylsterigmatocystin. The Baeyer-Villiger oxidas stcQ and the reductase stcR might be involved in the biosynthetic step from versicolorin A to demethylsterigmatocystin. The final step in the biosynthesis of sterigmatocystin is the methylation of demethylsterigmatocystin catalyzed by the methyltransferase stcP. The polypeptide is Versicolorin B synthase stcN (Emericella nidulans (strain FGSC A4 / ATCC 38163 / CBS 112.46 / NRRL 194 / M139) (Aspergillus nidulans)).